A 98-amino-acid chain; its full sequence is Co-chaperonin GroES (98 aa).

Belongs to the GroES chaperonin family. In terms of assembly, heptamer of 7 subunits arranged in a ring. Interacts with the chaperonin GroEL.

It is found in the cytoplasm. Together with the chaperonin GroEL, plays an essential role in assisting protein folding. The GroEL-GroES system forms a nano-cage that allows encapsulation of the non-native substrate proteins and provides a physical environment optimized to promote and accelerate protein folding. GroES binds to the apical surface of the GroEL ring, thereby capping the opening of the GroEL channel. In Beutenbergia cavernae (strain ATCC BAA-8 / DSM 12333 / CCUG 43141 / JCM 11478 / NBRC 16432 / NCIMB 13614 / HKI 0122), this protein is Co-chaperonin GroES.